The primary structure comprises 189 residues: Peptidyl-tRNA hydrolase (189 aa).

A tRNA-binding site is contributed by Tyr15. Catalysis depends on His20, which acts as the Proton acceptor. Residues Phe66, Asn68, and Asn114 each contribute to the tRNA site.

It belongs to the PTH family. Monomer.

The protein localises to the cytoplasm. The enzyme catalyses an N-acyl-L-alpha-aminoacyl-tRNA + H2O = an N-acyl-L-amino acid + a tRNA + H(+). Hydrolyzes ribosome-free peptidyl-tRNAs (with 1 or more amino acids incorporated), which drop off the ribosome during protein synthesis, or as a result of ribosome stalling. In terms of biological role, catalyzes the release of premature peptidyl moieties from peptidyl-tRNA molecules trapped in stalled 50S ribosomal subunits, and thus maintains levels of free tRNAs and 50S ribosomes. This is Peptidyl-tRNA hydrolase from Streptococcus pyogenes serotype M6 (strain ATCC BAA-946 / MGAS10394).